The primary structure comprises 345 residues: N-acetyl-gamma-glutamyl-phosphate reductase (345 aa).

The active site involves Cys-149.

It belongs to the NAGSA dehydrogenase family. Type 1 subfamily.

It localises to the cytoplasm. The enzyme catalyses N-acetyl-L-glutamate 5-semialdehyde + phosphate + NADP(+) = N-acetyl-L-glutamyl 5-phosphate + NADPH + H(+). It participates in amino-acid biosynthesis; L-arginine biosynthesis; N(2)-acetyl-L-ornithine from L-glutamate: step 3/4. In terms of biological role, catalyzes the NADPH-dependent reduction of N-acetyl-5-glutamyl phosphate to yield N-acetyl-L-glutamate 5-semialdehyde. The chain is N-acetyl-gamma-glutamyl-phosphate reductase from Bacillus cereus (strain AH187).